The chain runs to 304 residues: Homoserine dehydrogenase (304 aa).

6 residues coordinate NADP(+): tyrosine 8, asparagine 10, valine 11, arginine 38, arginine 39, and serine 73. Residue tyrosine 8 participates in NADPH binding. Residues valine 11 and arginine 38 each contribute to the NADPH site. Valine 11 lines the NAD(+) pocket. Serine 73, serine 74, threonine 100, and lysine 102 together coordinate NADPH. Serine 73 is a binding site for NAD(+). NADP(+)-binding residues include threonine 100 and lysine 102. Positions 129 and 133 each coordinate Na(+). The NADP(+) site is built by glycine 182 and glutamate 185. Glutamate 185 and aspartate 196 together coordinate L-homoserine. Residue lysine 200 is the Proton donor of the active site. NADP(+) is bound at residue glycine 284. Glycine 284 contributes to the NADPH binding site. Residue glycine 284 participates in NAD(+) binding.

Belongs to the homoserine dehydrogenase family. As to quaternary structure, homodimer. Requires a metal cation as cofactor. In terms of processing, the enzyme is activated by reductive cleavage of the interchain disulfide bond between the two subunits.

The catalysed reaction is L-homoserine + NADP(+) = L-aspartate 4-semialdehyde + NADPH + H(+). It catalyses the reaction L-homoserine + NAD(+) = L-aspartate 4-semialdehyde + NADH + H(+). It functions in the pathway amino-acid biosynthesis; L-methionine biosynthesis via de novo pathway; L-homoserine from L-aspartate: step 3/3. The protein operates within amino-acid biosynthesis; L-threonine biosynthesis; L-threonine from L-aspartate: step 3/5. With respect to regulation, inhibited by cysteine. Catalyzes the conversion of L-aspartate-beta-semialdehyde (L-Asa) to L-homoserine (L-Hse), the third step in the biosynthesis of threonine and methionine from aspartate. This is Homoserine dehydrogenase from Sulfurisphaera tokodaii (strain DSM 16993 / JCM 10545 / NBRC 100140 / 7) (Sulfolobus tokodaii).